The chain runs to 417 residues: D-amino acid dehydrogenase (417 aa).

3–17 contributes to the FAD binding site; the sequence is VIVLGSGVIGVTAAW.

The protein belongs to the DadA oxidoreductase family. It depends on FAD as a cofactor.

The catalysed reaction is a D-alpha-amino acid + A + H2O = a 2-oxocarboxylate + AH2 + NH4(+). Its pathway is amino-acid degradation; D-alanine degradation; NH(3) and pyruvate from D-alanine: step 1/1. Oxidative deamination of D-amino acids. The sequence is that of D-amino acid dehydrogenase from Methylobacillus flagellatus (strain ATCC 51484 / DSM 6875 / VKM B-1610 / KT).